The primary structure comprises 143 residues: Midkine (143 aa).

An N-terminal signal peptide occupies residues 1 to 20 (MQHRGFLLLTLLALLALTSA). 5 disulfides stabilise this stretch: Cys-37-Cys-61, Cys-45-Cys-70, Cys-52-Cys-74, Cys-84-Cys-116, and Cys-94-Cys-126.

This sequence belongs to the pleiotrophin family. Homodimer. Interacts with ALK. Interacts with LRP1; promotes neuronal survival. Interacts with LRP2. Interacts with NCAM1. Interacts (via C-terminal) with PTPRZ1 (via chondroitin sulfate chains); this interaction is inhibited by PTN; this interaction promotes neuronal migration. Interacts with NCL; this interaction promotes NCL clustering and lateral movements of this complex into lipid rafts leading to MDK internalization. Interacts with LRP6 and LRP8: this interaction is calcium dependent. Interacts with ITGA4. Interacts with ITGA6. Interacts with ITGB1. Interacts with ITGA4:ITGB1 complex; this interaction mediates MDK-induced osteoblast cells migration through PXN phosphorylation. Interacts with ITGA6:ITGB1 complex; this interaction mediates MDK-induced neurite outgrowth. Interacts with NOTCH2; this interaction mediates a nuclear accumulation of NOTCH2 and therefore activation of NOTCH2 signaling leading to interaction between HES1 and STAT3. Interacts with GPC2 (via heparan sulfate chain); this interaction is inhibited by heparin followed by chondroitin sulfate E; this interaction induces GPC2 clustering through heparan sulfate chain; this interaction induces neuronal cell adhesion and neurite outgrowth. Interacts with SDC3; this interaction induces SDC3 clustering; this interaction induces neuronal cell adhesion and neurite outgrowth. Interacts with SDC1. Interacts with CSPG5; this interaction promotes elongation of oligodendroglial precursor-like cells. In terms of tissue distribution, expressed in various tumor cell lines. In insulinoma tissue predominantly expressed in precancerous lesions.

It localises to the secreted. Secreted protein that functions as a cytokine and growth factor and mediates its signal through cell-surface proteoglycan and non-proteoglycan receptors. Binds cell-surface proteoglycan receptors via their chondroitin sulfate (CS) groups. Thereby regulates many processes like inflammatory response, cell proliferation, cell adhesion, cell growth, cell survival, tissue regeneration, cell differentiation and cell migration. Participates in inflammatory processes by exerting two different activities. Firstly, mediates neutrophils and macrophages recruitment to the sites of inflammation both by direct action by cooperating namely with ITGB2 via LRP1 and by inducing chemokine expression. This inflammation can be accompanied by epithelial cell survival and smooth muscle cell migration after renal and vessel damage, respectively. Secondly, suppresses the development of tolerogenic dendric cells thereby inhibiting the differentiation of regulatory T cells and also promote T cell expansion through NFAT signaling and Th1 cell differentiation. Promotes tissue regeneration after injury or trauma. After heart damage negatively regulates the recruitment of inflammatory cells and mediates cell survival through activation of anti-apoptotic signaling pathways via MAPKs and AKT pathways through the activation of angiogenesis. Also facilitates liver regeneration as well as bone repair by recruiting macrophage at trauma site and by promoting cartilage development by facilitating chondrocyte differentiation. Plays a role in brain by promoting neural precursor cells survival and growth through interaction with heparan sulfate proteoglycans. Binds PTPRZ1 and promotes neuronal migration and embryonic neurons survival. Binds SDC3 or GPC2 and mediates neurite outgrowth and cell adhesion. Binds chondroitin sulfate E and heparin leading to inhibition of neuronal cell adhesion induced by binding with GPC2. Binds CSPG5 and promotes elongation of oligodendroglial precursor-like cells. Also binds ITGA6:ITGB1 complex; this interaction mediates MDK-induced neurite outgrowth. Binds LRP1; promotes neuronal survival. Binds ITGA4:ITGB1 complex; this interaction mediates MDK-induced osteoblast cells migration through PXN phosphorylation. Binds anaplastic lymphoma kinase (ALK) which induces ALK activation and subsequent phosphorylation of the insulin receptor substrate (IRS1), followed by the activation of mitogen-activated protein kinase (MAPK) and PI3-kinase, and the induction of cell proliferation. Promotes epithelial to mesenchymal transition through interaction with NOTCH2. During arteriogenesis, plays a role in vascular endothelial cell proliferation by inducing VEGFA expression and release which in turn induces nitric oxide synthase expression. Moreover activates vasodilation through nitric oxide synthase activation. Negatively regulates bone formation in response to mechanical load by inhibiting Wnt/beta-catenin signaling in osteoblasts. In addition plays a role in hippocampal development, working memory, auditory response, early fetal adrenal gland development and the female reproductive system. The protein is Midkine of Homo sapiens (Human).